A 23-amino-acid chain; its full sequence is SVLEIGLMLQEETEKNPKTSYSI.

The disordered stretch occupies residues 1–23 (SVLEIGLMLQEETEKNPKTSYSI).

Post-translationally, contains 7 disulfide bonds. In terms of tissue distribution, expressed by the venom gland.

The protein resides in the secreted. The sequence is that of Basic phospholipase A2 homolog Vur-S49 analog from Vipera renardi (Steppe viper).